A 641-amino-acid chain; its full sequence is 1-phosphatidylinositol 4,5-bisphosphate phosphodiesterase zeta-1 (641 aa).

The EF-hand domain maps to 35 to 70; that stretch reads CSYIHVKRIFKDNDRLKQGRITIEEFRAIYRILTHR. One can recognise a PI-PLC X-box domain in the interval 155–299; sequence QDMTHPLNDY…LKFKVLVKNK (145 aa). Catalysis depends on residues His170 and His215. In terms of domain architecture, PI-PLC Y-box spans 382–498; the sequence is LSDLVIYTKA…GYILKPHFLR (117 aa). The C2 domain occupies 498–622; the sequence is RESESYFNPS…KGYRRVPLFS (125 aa).

As to quaternary structure, interacts via its C2 domain with PtdIns(3)P and, to a lesser extent, PtdIns(5)P in vitro. The cofactor is Ca(2+).

Its subcellular location is the nucleus. The protein resides in the cytoplasm. It localises to the perinuclear region. The catalysed reaction is a 1,2-diacyl-sn-glycero-3-phospho-(1D-myo-inositol-4,5-bisphosphate) + H2O = 1D-myo-inositol 1,4,5-trisphosphate + a 1,2-diacyl-sn-glycerol + H(+). Its function is as follows. The production of the second messenger molecules diacylglycerol (DAG) and inositol 1,4,5-trisphosphate (IP3) is mediated by activated phosphatidylinositol-specific phospholipase C enzymes. In vitro, hydrolyzes PtdIns(4,5)P2 in a Ca(2+)-dependent manner. Triggers intracellular Ca(2+) oscillations in oocytes solely during M phase and is involved in inducing oocyte activation and initiating embryonic development up to the blastocyst stage. Is therefore a strong candidate for the egg-activating soluble sperm factor that is transferred from the sperm into the egg cytoplasm following gamete membrane fusion. May exert an inhibitory effect on phospholipase-C-coupled processes that depend on calcium ions and protein kinase C, including CFTR trafficking and function. The protein is 1-phosphatidylinositol 4,5-bisphosphate phosphodiesterase zeta-1 of Macaca fascicularis (Crab-eating macaque).